The sequence spans 466 residues: Asparagine--tRNA ligase (466 aa).

Belongs to the class-II aminoacyl-tRNA synthetase family. As to quaternary structure, homodimer.

It localises to the cytoplasm. The enzyme catalyses tRNA(Asn) + L-asparagine + ATP = L-asparaginyl-tRNA(Asn) + AMP + diphosphate + H(+). The protein is Asparagine--tRNA ligase of Myxococcus xanthus (strain DK1622).